Here is a 207-residue protein sequence, read N- to C-terminus: Methylated-DNA--protein-cysteine methyltransferase (207 aa).

Residues Tyr-123 and Arg-137 each coordinate DNA. Cys-154 serves as the catalytic Nucleophile; methyl group acceptor. Ser-160 contributes to the DNA binding site.

The protein belongs to the MGMT family.

The protein resides in the nucleus. It catalyses the reaction a 6-O-methyl-2'-deoxyguanosine in DNA + L-cysteinyl-[protein] = S-methyl-L-cysteinyl-[protein] + a 2'-deoxyguanosine in DNA. It carries out the reaction a 4-O-methyl-thymidine in DNA + L-cysteinyl-[protein] = a thymidine in DNA + S-methyl-L-cysteinyl-[protein]. Functionally, involved in the cellular defense against the biological effects of O6-methylguanine (O6-MeG) and O4-methylthymine (O4-MeT) in DNA. Repairs the methylated nucleobase in DNA by stoichiometrically transferring the methyl group to a cysteine residue in the enzyme. This is a suicide reaction: the enzyme is irreversibly inactivated. The protein is Methylated-DNA--protein-cysteine methyltransferase (MGT1) of Candida glabrata (strain ATCC 2001 / BCRC 20586 / JCM 3761 / NBRC 0622 / NRRL Y-65 / CBS 138) (Yeast).